The primary structure comprises 255 residues: MKVDLNSDLGESFGRYKLGLDDEVMKYITSANVACGWHAGDPLVMRKTVRLAKKNNVQVGAHPGYPDLMGFGRRYMKLTPEEARNYILYQIGALYAFVKAEGLELQHVKPHGALYNAMVKEEDLARAVIEGILDFDKRLIVVTLAGSRVVEIAREMGARVAQEGFADRAYNPDGTLVPRSRPGAVIEDKEEIAERVISMVKDGGIRAINGEWIELEVDTICVHGDNPKAVEITAYIRRRLEEEGVKVLPMGDFIK.

It belongs to the LamB/PxpA family. As to quaternary structure, forms a complex composed of PxpA, PxpB and PxpC.

The catalysed reaction is 5-oxo-L-proline + ATP + 2 H2O = L-glutamate + ADP + phosphate + H(+). Functionally, catalyzes the cleavage of 5-oxoproline to form L-glutamate coupled to the hydrolysis of ATP to ADP and inorganic phosphate. The chain is 5-oxoprolinase subunit A from Pyrococcus furiosus (strain ATCC 43587 / DSM 3638 / JCM 8422 / Vc1).